The sequence spans 804 residues: Phenylalanine--tRNA ligase beta subunit (804 aa).

Residues 40–153 enclose the tRNA-binding domain; sequence PLPDLRVVVG…SSYAVGEPFA (114 aa). In terms of domain architecture, B5 spans 400–476; the sequence is PALLVLPFRP…RLHGYDNIEA (77 aa). Mg(2+)-binding residues include Asp454, Asp460, Glu463, and Glu464. The 93-residue stretch at 710–802 folds into the FDX-ACB domain; the sequence is SKFPAVQRDL…AESKLGAVIR (93 aa).

This sequence belongs to the phenylalanyl-tRNA synthetase beta subunit family. Type 1 subfamily. Tetramer of two alpha and two beta subunits. Mg(2+) serves as cofactor.

It localises to the cytoplasm. It carries out the reaction tRNA(Phe) + L-phenylalanine + ATP = L-phenylalanyl-tRNA(Phe) + AMP + diphosphate + H(+). The polypeptide is Phenylalanine--tRNA ligase beta subunit (Chlorobium luteolum (strain DSM 273 / BCRC 81028 / 2530) (Pelodictyon luteolum)).